The sequence spans 428 residues: Glutamyl-tRNA reductase (428 aa).

Substrate contacts are provided by residues Thr49–Arg52, Ser109, Glu114–Gln116, and Gln120. Residue Cys50 is the Nucleophile of the active site. Gly189–Ser194 is an NADP(+) binding site.

It belongs to the glutamyl-tRNA reductase family. In terms of assembly, homodimer.

It carries out the reaction (S)-4-amino-5-oxopentanoate + tRNA(Glu) + NADP(+) = L-glutamyl-tRNA(Glu) + NADPH + H(+). Its pathway is porphyrin-containing compound metabolism; protoporphyrin-IX biosynthesis; 5-aminolevulinate from L-glutamyl-tRNA(Glu): step 1/2. It functions in the pathway porphyrin-containing compound metabolism; chlorophyll biosynthesis. Catalyzes the NADPH-dependent reduction of glutamyl-tRNA(Glu) to glutamate 1-semialdehyde (GSA). This is Glutamyl-tRNA reductase from Microcystis aeruginosa (strain NIES-843 / IAM M-2473).